A 456-amino-acid polypeptide reads, in one-letter code: Dothistromin biosynthesis regulatory protein aflJ (456 aa).

The 70-residue stretch at 74–143 (LARENQLLAC…PKPGYVAHSG (70 aa)) folds into the HTH iclR-type domain. A DNA-binding region (H-T-H motif) is located at residues 104 to 123 (YSDVADLACVPVDQLRRIAR). A compositionally biased stretch (polar residues) spans 290–300 (KLHNGLSTPPE). The tract at residues 290–314 (KLHNGLSTPPESDTGPAARAAKASE) is disordered.

It is found in the nucleus. Functionally, transcription coactivator involved in regulation of the dothistromin biosynthesis gene cluster with aflR. The protein is Dothistromin biosynthesis regulatory protein aflJ of Dothistroma septosporum (strain NZE10 / CBS 128990) (Red band needle blight fungus).